The sequence spans 185 residues: Ribosome-recycling factor (185 aa).

It belongs to the RRF family.

It localises to the cytoplasm. Its function is as follows. Responsible for the release of ribosomes from messenger RNA at the termination of protein biosynthesis. May increase the efficiency of translation by recycling ribosomes from one round of translation to another. The sequence is that of Ribosome-recycling factor from Pseudomonas aeruginosa (strain LESB58).